Reading from the N-terminus, the 80-residue chain is Delta-actitoxin-Amc2a (80 aa).

A signal peptide spans methionine 1–alanine 19. The propeptide occupies alanine 20–valine 30. 3 disulfides stabilise this stretch: cysteine 37–cysteine 73, cysteine 39–cysteine 65, and cysteine 55–cysteine 74. Hydroxyproline is present on proline 56.

The protein belongs to the sea anemone type 3 (BDS) potassium channel toxin family.

The protein localises to the secreted. It is found in the nematocyst. Functionally, neurotoxon that induces paralysis when injected into crabs. This is Delta-actitoxin-Amc2a from Antheopsis maculata (Sea anemone).